The following is a 456-amino-acid chain: RuvB-like 1 (456 aa).

An ATP-binding site is contributed by 70–77 (GPPGTGKT).

Belongs to the RuvB family. In terms of assembly, forms homohexameric rings. Can form a dodecamer with ruvbl2 made of two stacked hexameric rings. Is a component of the RNA polymerase II holoenzyme complex. Component of the chromatin-remodeling Ino80 complex. Component of some MLL1/MLL complex.

It localises to the nucleus. The protein resides in the dynein axonemal particle. The enzyme catalyses ATP + H2O = ADP + phosphate + H(+). Its function is as follows. Has single-stranded DNA-stimulated ATPase and ATP-dependent DNA helicase (3' to 5') activity suggesting a role in nuclear processes such as recombination and transcription. Proposed core component of the chromatin remodeling INO80 complex which exhibits DNA- and nucleosome-activated ATPase activity and catalyzes ATP-dependent nucleosome sliding. The protein is RuvB-like 1 (ruvbl1) of Xenopus laevis (African clawed frog).